The chain runs to 220 residues: Superoxide dismutase [Cu-Zn], chloroplastic (220 aa).

A chloroplast-targeting transit peptide spans 1-66 (MAAHCILFSS…AAPKPLTVFA (66 aa)). Residues His112, His114, and His129 each coordinate Cu cation. A disulfide bond links Cys123 and Cys212. Positions 129, 137, 146, and 149 each coordinate Zn(2+). His186 serves as a coordination point for Cu cation.

Belongs to the Cu-Zn superoxide dismutase family. Homotetramer. Cu cation serves as cofactor. Requires Zn(2+) as cofactor.

It localises to the plastid. The protein resides in the chloroplast. It catalyses the reaction 2 superoxide + 2 H(+) = H2O2 + O2. In terms of biological role, destroys radicals which are normally produced within the cells and which are toxic to biological systems. The polypeptide is Superoxide dismutase [Cu-Zn], chloroplastic (SODCP) (Solidago canadensis var. scabra (Tall goldenrod)).